Consider the following 341-residue polypeptide: Eukaryotic translation initiation factor 2 subunit 1 (341 aa).

The S1 motif domain occupies 16 to 87 (EDVVMVNVLS…EKGYIDLSKR (72 aa)). A Phosphoserine modification is found at Ser51. Positions 293-341 (AENAQVAGDDDEEDGADQEGMQFDPEKEFNHKGSGAGRANEEDEEEEED) are disordered. Residues 300–309 (GDDDEEDGAD) show a composition bias toward acidic residues.

This sequence belongs to the eIF-2-alpha family. In terms of assembly, eukaryotic translation initiation factor 2 eIF2 is a heterotrimeric complex composed of an alpha, a beta and a gamma subunit. In terms of processing, phosphorylation of eIF-2-alpha impairs the recycling of eIF-2 between successive rounds of initiation and thus leads to inhibition of translation.

Its subcellular location is the cytoplasm. The protein localises to the cytosol. Functionally, eIF-2 functions in the early steps of protein synthesis by forming a ternary complex with GTP and initiator tRNA. This pre-initiation complex mediates ribosomal recognition of a start codon during the scanning process of the leader region. This Drosophila melanogaster (Fruit fly) protein is Eukaryotic translation initiation factor 2 subunit 1.